Consider the following 202-residue polypeptide: MNSLAGLFITAVFVENLALTFFLGMCTFLAISKKIEVAFGMGIAVIVVQTLTVPINNLVYQYLLRDGALVWAGLAEIDLTFLGLVSYLGVIAAIVQILEMFLDRFMPALHSALGIYLPLIAVNCAILGGSLFMVERDYNFTESLVYGLGSGFGWALAIVALAGVRERLKYSDVPDGLQGLGITFISAGLMAMGFMAFSGIRL.

Transmembrane regions (helical) follow at residues 4–24 (LAGLFITAVFVENLALTFFLG), 35–55 (IEVAFGMGIAVIVVQTLTVPI), 81–101 (FLGLVSYLGVIAAIVQILEMF), 114–134 (GIYLPLIAVNCAILGGSLFMV), 144–164 (LVYGLGSGFGWALAIVALAGV), and 180–200 (LGITFISAGLMAMGFMAFSGI).

It belongs to the NqrDE/RnfAE family. In terms of assembly, composed of six subunits; NqrA, NqrB, NqrC, NqrD, NqrE and NqrF.

The protein localises to the cell inner membrane. The enzyme catalyses a ubiquinone + n Na(+)(in) + NADH + H(+) = a ubiquinol + n Na(+)(out) + NAD(+). Functionally, NQR complex catalyzes the reduction of ubiquinone-1 to ubiquinol by two successive reactions, coupled with the transport of Na(+) ions from the cytoplasm to the periplasm. NqrA to NqrE are probably involved in the second step, the conversion of ubisemiquinone to ubiquinol. This Nitrosomonas europaea (strain ATCC 19718 / CIP 103999 / KCTC 2705 / NBRC 14298) protein is Na(+)-translocating NADH-quinone reductase subunit E.